A 402-amino-acid chain; its full sequence is Plasminogen activator inhibitor 1 (402 aa).

The N-terminal stretch at Met-1 to Ala-23 is a signal peptide. N-linked (GlcNAc...) asparagine glycosylation is found at Asn-232, Asn-288, and Asn-352.

It belongs to the serpin family. As to quaternary structure, forms a heterodimer with TMPRSS7. Interacts with VTN. Binds LRP1B; binding is followed by internalization and degradation. Interacts with PPP1CB. In complex with PLAU/uPA, interacts with PLAUR/uPAR. Interacts with SORL1 and LRP1, either alone or in complex with PLAU; these interactions are abolished in the presence of LRPAP1/RAP. The ternary complex composed of PLAUR-PLAU-PAI1 also interacts with SORL1. Interacts with PLAT/tPA. Also interacts with SORL1, when complexed to PLAT/tPA. Post-translationally, inactivated by proteolytic attack of the urokinase-type (u-PA) and the tissue-type (TPA), cleaving the 369-Arg-|-Met-370 bond. Expressed in endothelial cells. Found in plasma, platelets, and hepatoma and fibrosarcoma cells.

It is found in the secreted. In terms of biological role, serine protease inhibitor. Inhibits TMPRSS7. Is a primary inhibitor of tissue-type plasminogen activator (PLAT) and urokinase-type plasminogen activator (PLAU). As PLAT inhibitor, it is required for fibrinolysis down-regulation and is responsible for the controlled degradation of blood clots. As PLAU inhibitor, it is involved in the regulation of cell adhesion and spreading. Acts as a regulator of cell migration, independently of its role as protease inhibitor. It is required for stimulation of keratinocyte migration during cutaneous injury repair. It is involved in cellular and replicative senescence. Plays a role in alveolar type 2 cells senescence in the lung. Is involved in the regulation of cementogenic differentiation of periodontal ligament stem cells, and regulates odontoblast differentiation and dentin formation during odontogenesis. This chain is Plasminogen activator inhibitor 1 (SERPINE1), found in Homo sapiens (Human).